The primary structure comprises 141 residues: Histone H2B (141 aa).

Residues 1-10 (MAPKAAEKKP) are compositionally biased toward basic and acidic residues. Positions 1 to 49 (MAPKAAEKKPSTGGKAPAGGKAPAEKKEAGKKTAAAASGDKKKRGKTRK) are disordered. An N6-acetyllysine; alternate mark is found at Lys8 and Lys9. Glycyl lysine isopeptide (Lys-Gly) (interchain with G-Cter in SUMO); alternate cross-links involve residues Lys8 and Lys9. Over residues 11 to 22 (STGGKAPAGGKA) the composition is skewed to low complexity. Lys15 is modified (N6-acetyllysine). Lys26 is modified (N6-acetyllysine; alternate). A Glycyl lysine isopeptide (Lys-Gly) (interchain with G-Cter in SUMO); alternate cross-link involves residue Lys26. Lys27 is covalently cross-linked (Glycyl lysine isopeptide (Lys-Gly) (interchain with G-Cter in SUMO)). Lys135 participates in a covalent cross-link: Glycyl lysine isopeptide (Lys-Gly) (interchain with G-Cter in ubiquitin).

This sequence belongs to the histone H2B family. In terms of assembly, the nucleosome is a histone octamer containing two molecules each of H2A, H2B, H3 and H4 assembled in one H3-H4 heterotetramer and two H2A-H2B heterodimers. The octamer wraps approximately 147 bp of DNA. Post-translationally, monoubiquitinated by the ubc2-bre1 complex to form H2BK123ub1. H2BK123ub1 gives a specific tag for epigenetic transcriptional activation and is also prerequisite for H3K4me and H3K79me formation. H2BK123ub1 also modulates the formation of double-strand breaks during meiosis and is a prerequisite for DNA-damage checkpoint activation. In terms of processing, acetylated by gcn5 to form H2BK11ac and H2BK16ac. H2BK16ac can also be formed by esa1. Acetylation of N-terminal lysines and particularly formation of H2BK11acK16ac has a positive effect on transcription. Sumoylation to form H2BK6su or H2BK7su, and probably also H2BK16su or H2BK17su, occurs preferentially near the telomeres and represses gene transcription.

It localises to the nucleus. It is found in the chromosome. Its function is as follows. Core component of nucleosome. Nucleosomes wrap and compact DNA into chromatin, limiting DNA accessibility to the cellular machineries which require DNA as a template. Histones thereby play a central role in transcription regulation, DNA repair, DNA replication and chromosomal stability. DNA accessibility is regulated via a complex set of post-translational modifications of histones, also called histone code, and nucleosome remodeling. This chain is Histone H2B (htb1), found in Aspergillus oryzae (strain ATCC 42149 / RIB 40) (Yellow koji mold).